The primary structure comprises 210 residues: Sortase A (210 aa).

At 1–5 (MNKQR) the chain is on the cytoplasmic side. The chain crosses the membrane as a helical span at residues 6 to 26 (IYSIVAILLFVVGGVLIGKPF). At 27–210 (YDGYQAEKKQ…GDLVGTKAKK (184 aa)) the chain is on the extracellular side. H126 functions as the Proton donor/acceptor in the catalytic mechanism. The active-site Acyl-thioester intermediate is the C187.

Belongs to the bacterial sortase family. Class A subfamily.

The protein localises to the cell membrane. Inhibited by thiol-reactive reagents. In terms of biological role, transpeptidase that anchors surface proteins to the cell wall. Recognizes and modifies its substrate by proteolytic cleavage of a C-terminal sorting signal. Following cleavage, a covalent intermediate is formed via a thioester bond between the sortase and its substrate, which is then transferred and covalently attached to the cell wall. This sortase recognizes a Leu-Pro-x-Thr-Gly (LPXTG) motif, which is cleaved by the sortase between the threonine and glycine residues. Important for growth in macrophages. May be critical in the early stages of inhalation anthrax. The sequence is that of Sortase A from Bacillus anthracis.